A 456-amino-acid polypeptide reads, in one-letter code: Cysteine--tRNA ligase (456 aa).

Position 29 (Cys29) interacts with Zn(2+). Residues 31–41 carry the 'HIGH' region motif; sequence PTVYDYAHVGN. Zn(2+) contacts are provided by Cys209, His234, and Glu238. The short motif at 267–271 is the 'KMSKS' region element; that stretch reads KMSKS. Lys270 serves as a coordination point for ATP.

Belongs to the class-I aminoacyl-tRNA synthetase family. Monomer. It depends on Zn(2+) as a cofactor.

It localises to the cytoplasm. It carries out the reaction tRNA(Cys) + L-cysteine + ATP = L-cysteinyl-tRNA(Cys) + AMP + diphosphate. The sequence is that of Cysteine--tRNA ligase from Rhodospirillum centenum (strain ATCC 51521 / SW).